Reading from the N-terminus, the 511-residue chain is Histidine ammonia-lyase (511 aa).

The segment at residues 143–145 is a cross-link (5-imidazolinone (Ala-Gly)); the sequence is ASG. Ser144 carries the 2,3-didehydroalanine (Ser) modification.

This sequence belongs to the PAL/histidase family. Contains an active site 4-methylidene-imidazol-5-one (MIO), which is formed autocatalytically by cyclization and dehydration of residues Ala-Ser-Gly.

The protein resides in the cytoplasm. The enzyme catalyses L-histidine = trans-urocanate + NH4(+). Its pathway is amino-acid degradation; L-histidine degradation into L-glutamate; N-formimidoyl-L-glutamate from L-histidine: step 1/3. The chain is Histidine ammonia-lyase from Vibrio parahaemolyticus serotype O3:K6 (strain RIMD 2210633).